Reading from the N-terminus, the 572-residue chain is NADP-dependent malic enzyme (572 aa).

N-acetylmethionine is present on Met1. Tyr102 acts as the Proton donor in catalysis. Arg155 contacts NADP(+). Lys173 serves as the catalytic Proton acceptor. A divalent metal cation contacts are provided by Glu245, Asp246, and Asp269. NADP(+) contacts are provided by residues Asp269 and 301–318; that span reads GAGEAALGIAHLIVMALE. Position 336 is a phosphoserine (Ser336). Asn408 is a binding site for NADP(+).

This sequence belongs to the malic enzymes family. In terms of assembly, homotetramer. Mg(2+) is required as a cofactor. Mn(2+) serves as cofactor. In terms of tissue distribution, expressed in all tissues tested including liver, placenta and white adipose tissue.

The protein resides in the cytoplasm. It catalyses the reaction (S)-malate + NADP(+) = pyruvate + CO2 + NADPH. The enzyme catalyses oxaloacetate + H(+) = pyruvate + CO2. Functionally, catalyzes the oxidative decarboxylation of (S)-malate in the presence of NADP(+) and divalent metal ions, and decarboxylation of oxaloacetate. This chain is NADP-dependent malic enzyme, found in Homo sapiens (Human).